Here is a 298-residue protein sequence, read N- to C-terminus: Rhodomycin D methylesterase DauP (298 aa).

Residues proline 25–leucine 277 form the AB hydrolase-1 domain.

It belongs to the methyl esterase DnrP family.

The catalysed reaction is rhodomycin D + H2O = 10-carboxy-13-deoxycarminomycin + methanol + H(+). It carries out the reaction 4-O-methylrhodomycin D + H2O = 10-carboxy-13-deoxydaunorubicin + methanol + H(+). It functions in the pathway antibiotic biosynthesis; daunorubicin biosynthesis. Its pathway is antibiotic biosynthesis; carminomycin biosynthesis. Functionally, involved in the biosynthesis of the anthracyclines carminomycin and daunorubicin (daunomycin) which are aromatic polyketide antibiotics that exhibit high cytotoxicity and are widely applied in the chemotherapy of a variety of cancers. Catalyzes the removal of methyl group from the carbomethoxy group of rhodomycin D (10-carbomethoxy-13-deoxycarminomycin) and 4-O-methylrhodomycin D to yield 10-carboxy-13-deoxycarminomycin and 10-carboxy-13-deoxydaunorubicin, respectively. Could be also involved in the decarboxylation of 10-carboxy-13-deoxycarminomycin and 10-carboxy-13-deoxydaunorubicin to yield 13-deoxycarminomycin and 13-deoxydaunorubicin, respectively. It seems that DauK may influence the ability of DauP to carry out the decarboxylation. This Streptomyces sp. (strain C5) protein is Rhodomycin D methylesterase DauP (dauP).